Reading from the N-terminus, the 569-residue chain is MSLWIPRQTYADLYGPTKGDRLRLADTELIIEIEHDFAHYGDEITFGGGKVIRDGMGQSSSAHDVLDLVITNAIIIDHWGIVKGDIGIKQGRIVKVGKAGNPDTMAGVDPELVVGANTEVIAGEHMIVTAGGIDSHIHFIAPGQIPEALSNGVTTLLGGGTGPATGTKATTCTPGVWNMARMLQAADAWPVNLGFLGKGNAAQPESLIQQIQAGACGLKLHEDWGTTPAAIDMCLSVADQYDVQVAIHTDTINEAGFLEDTIRAIAGRTIHTYHTEGAGGGHAPDIIKIAGERYVLPSSTNPTRPYTVNTIAEHLDMLMVCHHLNPQVPEDVAFAESRIRPETIAAEDILHDLGVISMISSDSQAMGRVGEVVTRTWQTAHKMKVQRGALLGDSARNDNQRVKRYIAKYTINPALAHGIAHEVGSIEPGKLADLVLWQPAFFGVKPEIIVKGGLIAWNAMGDANASIPTPQPVLYRPMFGAFGGALGATSLTFVSAAAHESGIGQQLNLQKVTSAVRGCRSVQKADLIHNNATPLIEVDPETYAVRADGELLTCEPATSLPLAQRYFLF.

Residues 131–569 (GGIDSHIHFI…LPLAQRYFLF (439 aa)) enclose the Urease domain. Histidine 136, histidine 138, and lysine 219 together coordinate Ni(2+). An N6-carboxylysine modification is found at lysine 219. Residue histidine 221 coordinates substrate. Residues histidine 248 and histidine 274 each coordinate Ni(2+). The Proton donor role is filled by histidine 322. Residue aspartate 362 participates in Ni(2+) binding.

Belongs to the metallo-dependent hydrolases superfamily. Urease alpha subunit family. As to quaternary structure, heterotrimer of UreA (gamma), UreB (beta) and UreC (alpha) subunits. Three heterotrimers associate to form the active enzyme. It depends on Ni cation as a cofactor. In terms of processing, carboxylation allows a single lysine to coordinate two nickel ions.

It is found in the cytoplasm. The enzyme catalyses urea + 2 H2O + H(+) = hydrogencarbonate + 2 NH4(+). The protein operates within nitrogen metabolism; urea degradation; CO(2) and NH(3) from urea (urease route): step 1/1. The polypeptide is Urease subunit alpha (Herpetosiphon aurantiacus (strain ATCC 23779 / DSM 785 / 114-95)).